The following is a 489-amino-acid chain: Cytochrome P450-DIT2 (489 aa).

Position 435 (Cys435) interacts with heme.

Belongs to the cytochrome P450 family. Heme serves as cofactor.

Its function is as follows. Involved in spore wall maturation. Thought to catalyze the oxidation of tyrosine residues in the formation of LL-dityrosine a precursor of the spore wall. This chain is Cytochrome P450-DIT2 (DIT2), found in Saccharomyces cerevisiae (strain ATCC 204508 / S288c) (Baker's yeast).